The chain runs to 245 residues: Methyltransferase-like protein 27 (245 aa).

In Homo sapiens (Human), this protein is Methyltransferase-like protein 27.